The chain runs to 448 residues: UDP-N-acetylmuramoylalanine--D-glutamate ligase (448 aa).

116 to 122 (GSNAKST) lines the ATP pocket.

Belongs to the MurCDEF family.

It localises to the cytoplasm. The enzyme catalyses UDP-N-acetyl-alpha-D-muramoyl-L-alanine + D-glutamate + ATP = UDP-N-acetyl-alpha-D-muramoyl-L-alanyl-D-glutamate + ADP + phosphate + H(+). It participates in cell wall biogenesis; peptidoglycan biosynthesis. Cell wall formation. Catalyzes the addition of glutamate to the nucleotide precursor UDP-N-acetylmuramoyl-L-alanine (UMA). This Pseudomonas fluorescens (strain ATCC BAA-477 / NRRL B-23932 / Pf-5) protein is UDP-N-acetylmuramoylalanine--D-glutamate ligase.